The following is a 100-amino-acid chain: Urease subunit gamma (100 aa).

The protein belongs to the urease gamma subunit family. Heterotrimer of UreA (gamma), UreB (beta) and UreC (alpha) subunits. Three heterotrimers associate to form the active enzyme.

It localises to the cytoplasm. It catalyses the reaction urea + 2 H2O + H(+) = hydrogencarbonate + 2 NH4(+). It functions in the pathway nitrogen metabolism; urea degradation; CO(2) and NH(3) from urea (urease route): step 1/1. The chain is Urease subunit gamma from Staphylococcus saprophyticus subsp. saprophyticus (strain ATCC 15305 / DSM 20229 / NCIMB 8711 / NCTC 7292 / S-41).